A 617-amino-acid polypeptide reads, in one-letter code: Dihydroxy-acid dehydratase (617 aa).

Aspartate 81 is a Mg(2+) binding site. Cysteine 122 lines the [2Fe-2S] cluster pocket. Residues aspartate 123 and lysine 124 each coordinate Mg(2+). The residue at position 124 (lysine 124) is an N6-carboxylysine. Residue cysteine 197 participates in [2Fe-2S] cluster binding. Glutamate 494 is a Mg(2+) binding site. The Proton acceptor role is filled by serine 520.

This sequence belongs to the IlvD/Edd family. In terms of assembly, homodimer. It depends on [2Fe-2S] cluster as a cofactor. Requires Mg(2+) as cofactor.

It catalyses the reaction (2R)-2,3-dihydroxy-3-methylbutanoate = 3-methyl-2-oxobutanoate + H2O. The enzyme catalyses (2R,3R)-2,3-dihydroxy-3-methylpentanoate = (S)-3-methyl-2-oxopentanoate + H2O. It functions in the pathway amino-acid biosynthesis; L-isoleucine biosynthesis; L-isoleucine from 2-oxobutanoate: step 3/4. Its pathway is amino-acid biosynthesis; L-valine biosynthesis; L-valine from pyruvate: step 3/4. Functions in the biosynthesis of branched-chain amino acids. Catalyzes the dehydration of (2R,3R)-2,3-dihydroxy-3-methylpentanoate (2,3-dihydroxy-3-methylvalerate) into 2-oxo-3-methylpentanoate (2-oxo-3-methylvalerate) and of (2R)-2,3-dihydroxy-3-methylbutanoate (2,3-dihydroxyisovalerate) into 2-oxo-3-methylbutanoate (2-oxoisovalerate), the penultimate precursor to L-isoleucine and L-valine, respectively. The sequence is that of Dihydroxy-acid dehydratase from Parafrankia sp. (strain EAN1pec).